The sequence spans 859 residues: Leucine--tRNA ligase (859 aa).

The 'HIGH' region motif lies at 42 to 52; it reads PYPSGRLHMGH. Positions 618 to 622 match the 'KMSKS' region motif; the sequence is KMSKS. Position 621 (Lys-621) interacts with ATP.

It belongs to the class-I aminoacyl-tRNA synthetase family.

The protein resides in the cytoplasm. The catalysed reaction is tRNA(Leu) + L-leucine + ATP = L-leucyl-tRNA(Leu) + AMP + diphosphate. The chain is Leucine--tRNA ligase from Shewanella sp. (strain W3-18-1).